The sequence spans 429 residues: UPF0242 protein CT_616 (429 aa).

Belongs to the UPF0242 family.

This is UPF0242 protein CT_616 from Chlamydia trachomatis serovar D (strain ATCC VR-885 / DSM 19411 / UW-3/Cx).